The sequence spans 141 residues: Nucleoside diphosphate kinase (141 aa).

ATP contacts are provided by lysine 11, phenylalanine 59, arginine 87, threonine 93, arginine 104, and asparagine 114. Histidine 117 functions as the Pros-phosphohistidine intermediate in the catalytic mechanism.

This sequence belongs to the NDK family. In terms of assembly, homotetramer. It depends on Mg(2+) as a cofactor.

It localises to the cytoplasm. It catalyses the reaction a 2'-deoxyribonucleoside 5'-diphosphate + ATP = a 2'-deoxyribonucleoside 5'-triphosphate + ADP. It carries out the reaction a ribonucleoside 5'-diphosphate + ATP = a ribonucleoside 5'-triphosphate + ADP. Its function is as follows. Major role in the synthesis of nucleoside triphosphates other than ATP. The ATP gamma phosphate is transferred to the NDP beta phosphate via a ping-pong mechanism, using a phosphorylated active-site intermediate. In Vibrio parahaemolyticus serotype O3:K6 (strain RIMD 2210633), this protein is Nucleoside diphosphate kinase.